Consider the following 181-residue polypeptide: Small ribosomal subunit protein uS4 (181 aa).

The 63-residue stretch at 106 to 168 (RRLQTLVYRK…PTSRIVKAKV (63 aa)) folds into the S4 RNA-binding domain.

This sequence belongs to the universal ribosomal protein uS4 family. As to quaternary structure, part of the 30S ribosomal subunit. Contacts protein S5. The interaction surface between S4 and S5 is involved in control of translational fidelity.

In terms of biological role, one of the primary rRNA binding proteins, it binds directly to 16S rRNA where it nucleates assembly of the body of the 30S subunit. Functionally, with S5 and S12 plays an important role in translational accuracy. This Caldivirga maquilingensis (strain ATCC 700844 / DSM 13496 / JCM 10307 / IC-167) protein is Small ribosomal subunit protein uS4.